A 332-amino-acid chain; its full sequence is Homeobox protein DLX-2 (332 aa).

A compositionally biased stretch (polar residues) spans 19-28 (ASSTYHQHQQ). The disordered stretch occupies residues 19-83 (ASSTYHQHQQ…QHPAGGGGGG (65 aa)). A compositionally biased stretch (low complexity) spans 40–49 (NSNSSSSNSS). The span at 55–75 (ESPTLPVSTATDSSYYTNQQH) shows a compositional bias: polar residues. Positions 155–214 (VRKPRTIYSSFQLAALQRRFQKTQYLALPERAELAASLGLTQTQVKIWFQNRRSKFKKMW) form a DNA-binding region, homeobox. Disordered stretches follow at residues 219–272 (IPTE…SSPS) and 304–332 (PSQT…GTIF). Phosphoserine is present on S235. Residues 253-266 (AGGGPGSGGGGAGS) show a composition bias toward gly residues. Residues 310–320 (AHHHHHHHHHA) show a composition bias toward basic residues.

The protein belongs to the distal-less homeobox family. As to quaternary structure, interacts (via homeobox DNA-binding domain) with POU4F2; this interaction enhances retinal ganglion cell (RGC) differentiation. Phosphorylated by serine/threonine kinases. In terms of tissue distribution, expressed only in neural and other ectodermal structures of the head: the brain, the vomeronasal organ, and the preameloblasts of the teeth. Primarily expressed in the germinal cells of the ventral forebrain in the midgestational embryo, and in both dorsal and ventral ventricular zones in late embryogenesis and early postnatal life. Expressed in the inner nuclear layer of the retina.

It is found in the nucleus. In terms of biological role, acts as a transcriptional activator. Activates transcription of CGA/alpha-GSU, via binding to the downstream activin regulatory element (DARE) in the gene promoter. Plays a role in terminal differentiation of interneurons, such as amacrine and bipolar cells in the developing retina. Likely to play a regulatory role in the development of the ventral forebrain. May play a role in craniofacial patterning and morphogenesis. In Mus musculus (Mouse), this protein is Homeobox protein DLX-2 (Dlx2).